Reading from the N-terminus, the 319-residue chain is MTNSIPWIEKYRPVNIDDVIIDDNISKQINIFLQDRENVHLIITGSPGVGKTSTVRCIAKELLGEDMSQGYLEINAAEDRGVRSISTIIPPFCKKVFAANKSKIILLDEADIMTSKCQYDINNMIKKFGRKTKFIFTCNDSSKIIEDIQSICRILRFKKLTDEQINQYLSKICVNEKIPYDEQGLRTICYISNGDMRKSINDLQKTAFTFEKITKNLVLKICKVPDPEDIRKIISLCLESNLEKADEIMNNIIKLDYCYFDIVTSFIYVLKVYDMSENLRLRLIMIVNETKINISKGLRSKLQLTGMICRLIKEIQRDE.

Residue 45–52 coordinates ATP; sequence GSPGVGKT.

Belongs to the activator 1 small subunits family. RfcS subfamily.

In terms of biological role, part of the RFC clamp loader complex which loads the PCNA sliding clamp onto DNA. The polypeptide is Putative replication factor C small subunit R395 (Acanthamoeba polyphaga mimivirus (APMV)).